The chain runs to 295 residues: MDMKTTGDDGYFVEERSAETVIARMRDCDDPRLKEIMAVVTRKLHEAVKEIEPTEEEWMKAIHFLTEVGQICNEWRQEWILFSDILGVSMLVDAINHRKPSGASESTVLGPFHVADAPEMPMGANICLDGKGEDMLVTGRILDTDGVPVAGARIDVWQANDEGFYDVQQKGIQPDFNLRGVFVTGEDGRYWFRAAKPKYYPIPDDGPVGQLLRAMGRHPYRPAHLHYIVSAEGFTTLVTHIFDPDDPYIRSDAVFGVKESLLADFQRVEDAQRAQELGFANGWFWSVDHDFVLAR.

Positions 165, 200, 224, and 226 each coordinate Fe cation.

The protein belongs to the intradiol ring-cleavage dioxygenase family. The cofactor is Fe(3+).

The catalysed reaction is benzene-1,2,4-triol + O2 = maleylacetate + 2 H(+). The protein operates within aromatic compound metabolism. Functionally, involved in the gamma-resorcylate (2,6-dihydroxybenzoate) catabolism. Catalyzes the conversion of hydroxyquinol to malelylacetate. The sequence is that of Hydroxyquinol 1,2-dioxygenase from Rhizobium sp. (strain MTP-10005).